The following is a 63-amino-acid chain: Venom peptide U-reduvitoxin-Pp19 (63 aa).

The first 23 residues, 1-23 (MSPYSILFVVVIALCLLPESIVG), serve as a signal peptide directing secretion. Intrachain disulfides connect cysteine 15/cysteine 62, cysteine 25/cysteine 53, and cysteine 30/cysteine 61.

In terms of tissue distribution, hemolymph (at protein level). Also weakly expressed by the venom gland (at protein level).

Its subcellular location is the secreted. Functionally, toxin with insecticidal activity. High doses of recombinant toxin causes impaired motor behavior of D.melanogaster, which progress slowly to paralysis and death after several hours. The sequence is that of Venom peptide U-reduvitoxin-Pp19 from Pristhesancus plagipennis (Common assassin bug).